The sequence spans 1516 residues: Lysine-specific demethylase 5C (1516 aa).

The region spanning 14–55 (CPVFEPSWAEFRDPLGYIAKIRPIAEKSGICKIRPPADWQPP) is the JmjN domain. Residues 24 to 128 (FRDPLGYIAK…IVYPYEMYQS (105 aa)) form the ARID domain. Residues 142 to 151 (NEEKDKEYKP) are compositionally biased toward basic and acidic residues. The tract at residues 142–186 (NEEKDKEYKPHSIPLRQSVQPSKFNSYGRRAKRLQPDPEPTEEDI) is disordered. Over residues 156–166 (LRQSVQPSKFN) the composition is skewed to polar residues. Residues Lys-164, Lys-188, Lys-203, and Lys-233 each participate in a glycyl lysine isopeptide (Lys-Gly) (interchain with G-Cter in SUMO2) cross-link. Residues 216 to 262 (LRKKDKEGPECPPTVVVKEESGGDVKVESTSPKTFLESKEELSHSPE) form a disordered region. Over residues 232-242 (VKEESGGDVKV) the composition is skewed to basic and acidic residues. Position 246 is a phosphoserine (Ser-246). Lys-254 participates in a covalent cross-link: Glycyl lysine isopeptide (Lys-Gly) (interchain with G-Cter in SUMO2). Residues Ser-260 and Ser-276 each carry the phosphoserine modification. The PHD-type 1 zinc-finger motif lies at 283–333 (SYVCRMCSRGDEDDKLLLCDGCDDNYHIFCLLPPLPEIPKGVWRCPKCVMA). Position 399 (Tyr-399) interacts with 2-oxoglutarate. The JmjC domain occupies 427–593 (EYATSGWNLN…AGRQCIEHYR (167 aa)). The Fe cation site is built by His-473 and Glu-475. 2-oxoglutarate contacts are provided by Ser-481, Asn-483, and Lys-491. His-561 contacts Fe cation. The C5HC2 zinc-finger motif lies at 666–718 (CIKCKTTCFLSALACYDCPDGLVCLSHINDLCKCSSSRQYLRYRYTLDELPAM). 2 positions are modified to phosphoserine: Ser-852 and Ser-856. Residue Lys-1086 forms a Glycyl lysine isopeptide (Lys-Gly) (interchain with G-Cter in SUMO2) linkage. The segment at 1144–1209 (TSICVCGQVP…KFLCPLCMRS (66 aa)) adopts a PHD-type 2 zinc-finger fold. Positions 1274–1305 (LQAEPRPEEPPTYPSTPAFDPLREGSGKDMPK) are disordered. Residues 1294 to 1304 (PLREGSGKDMP) show a composition bias toward basic and acidic residues. At Ser-1318 the chain carries Phosphoserine. Residues 1400–1516 (ERHGSRARGR…CPQQPPQQQL (117 aa)) form a disordered region. A compositionally biased stretch (basic residues) spans 1404-1419 (SRARGRALERRRRRKV). Over residues 1420–1437 (DRGGEGDDPAREELEPKR) the composition is skewed to basic and acidic residues. Residues 1444-1459 (EAEEAHEEEELEEETG) are compositionally biased toward acidic residues. Polar residues-rich tracts occupy residues 1471–1481 (GSPSTQENQNG) and 1489–1500 (SSGSSVPFSTLT).

It belongs to the JARID1 histone demethylase family. Part of two distinct complexes, one containing E2F6, and the other containing REST. Interacts with ZMYND8. Requires Fe(2+) as cofactor.

The protein resides in the nucleus. It carries out the reaction N(6),N(6),N(6)-trimethyl-L-lysyl(4)-[histone H3] + 3 2-oxoglutarate + 3 O2 = L-lysyl(4)-[histone H3] + 3 formaldehyde + 3 succinate + 3 CO2. In terms of biological role, histone demethylase that specifically demethylates 'Lys-4' of histone H3, thereby playing a central role in histone code. Does not demethylate histone H3 'Lys-9', H3 'Lys-27', H3 'Lys-36', H3 'Lys-79' or H4 'Lys-20'. Demethylates trimethylated and dimethylated but not monomethylated H3 'Lys-4'. Participates in transcriptional repression of neuronal genes by recruiting histone deacetylases and REST at neuron-restrictive silencer elements. This is Lysine-specific demethylase 5C (KDM5C) from Sus scrofa (Pig).